Reading from the N-terminus, the 254-residue chain is Sugar fermentation stimulation protein homolog (254 aa).

The protein belongs to the SfsA family.

The protein is Sugar fermentation stimulation protein homolog of Parasynechococcus marenigrum (strain WH8102).